A 184-amino-acid chain; its full sequence is TATA-box-binding protein (184 aa).

2 repeat units span residues 9-85 (IENI…IDKL) and 100-178 (VQNI…KKEL).

The protein belongs to the TBP family.

In terms of biological role, general factor that plays a role in the activation of archaeal genes transcribed by RNA polymerase. Binds specifically to the TATA box promoter element which lies close to the position of transcription initiation. The chain is TATA-box-binding protein from Thermoplasma volcanium (strain ATCC 51530 / DSM 4299 / JCM 9571 / NBRC 15438 / GSS1).